The sequence spans 715 residues: DNA ligase (715 aa).

NAD(+) is bound by residues 47 to 51 (DADYD), 96 to 97 (SL), and Glu-128. The active-site N6-AMP-lysine intermediate is Lys-130. NAD(+) contacts are provided by Arg-151, Glu-188, Lys-306, and Lys-330. Residues Cys-435, Cys-438, Cys-453, and Cys-459 each contribute to the Zn(2+) site. Residues 637–715 (RRDTAVAGKT…EDEWLALIGN (79 aa)) enclose the BRCT domain.

Belongs to the NAD-dependent DNA ligase family. LigA subfamily. The cofactor is Mg(2+). Requires Mn(2+) as cofactor.

The catalysed reaction is NAD(+) + (deoxyribonucleotide)n-3'-hydroxyl + 5'-phospho-(deoxyribonucleotide)m = (deoxyribonucleotide)n+m + AMP + beta-nicotinamide D-nucleotide.. DNA ligase that catalyzes the formation of phosphodiester linkages between 5'-phosphoryl and 3'-hydroxyl groups in double-stranded DNA using NAD as a coenzyme and as the energy source for the reaction. It is essential for DNA replication and repair of damaged DNA. This is DNA ligase from Rhodopseudomonas palustris (strain ATCC BAA-98 / CGA009).